The chain runs to 594 residues: Alanine--tRNA ligase (594 aa).

His456, His460, Cys558, and His562 together coordinate Zn(2+).

It belongs to the class-II aminoacyl-tRNA synthetase family. The cofactor is Zn(2+).

The protein localises to the cytoplasm. The enzyme catalyses tRNA(Ala) + L-alanine + ATP = L-alanyl-tRNA(Ala) + AMP + diphosphate. Its function is as follows. Catalyzes the attachment of alanine to tRNA(Ala) in a two-step reaction: alanine is first activated by ATP to form Ala-AMP and then transferred to the acceptor end of tRNA(Ala). Also edits incorrectly charged Ser-tRNA(Ala) and Gly-tRNA(Ala) via its editing domain. This chain is Alanine--tRNA ligase (alaS), found in Borreliella burgdorferi (strain ATCC 35210 / DSM 4680 / CIP 102532 / B31) (Borrelia burgdorferi).